The following is a 214-amino-acid chain: MSFIQRRLLSQTLFLRSQVGSLPLYISPEVQVSINALSMPRIIRKGRTSMNISQNITVKGPKGELSVEVPDFLHLDKDEKHGKINVTVQNSEDKHQRSMWGTVRSLINNHIIGVTEGHLAVLRFVGTGYRAQLENDGKFVNVKVGASIKQGLDVPEGIVVKTPAPTSLIIEGCNKQQVLLFAAKLRKFHPPEPYKGKGIYVNDETIKLKDKKIK.

The N-terminal 16 residues, 1-16 (MSFIQRRLLSQTLFLR), are a transit peptide targeting the mitochondrion.

This sequence belongs to the universal ribosomal protein uL6 family. As to quaternary structure, component of the mitochondrial large ribosomal subunit (mt-LSU). Mature yeast 74S mitochondrial ribosomes consist of a small (37S) and a large (54S) subunit. The 37S small subunit contains a 15S ribosomal RNA (15S mt-rRNA) and 34 different proteins. The 54S large subunit contains a 21S rRNA (21S mt-rRNA) and 46 different proteins.

The protein resides in the mitochondrion. Its function is as follows. Component of the mitochondrial ribosome (mitoribosome), a dedicated translation machinery responsible for the synthesis of mitochondrial genome-encoded proteins, including at least some of the essential transmembrane subunits of the mitochondrial respiratory chain. The mitoribosomes are attached to the mitochondrial inner membrane and translation products are cotranslationally integrated into the membrane. This Saccharomyces cerevisiae (strain ATCC 204508 / S288c) (Baker's yeast) protein is Large ribosomal subunit protein uL6m (MRPL6).